A 365-amino-acid chain; its full sequence is MAVYVVTGKLGAGKTLVAVSRIQRTLAKGGIVATNLNLKLHHFPQVGRYAKQCRVMRIADKPTLEDLEAIGRGNLSYDESKNGLIVLDECGTWFNSRNWSDKSRQPVIDWFLHARKLGWDVIFIIQDISLMDKQAREALAEHVVYCRRLDKLNIPIIGGLISVLSGGRLPLPKVHFGIVKYGDNPQSLTVDKWIYTGTDLYAAYDTKQIFTSDRELSPPFCPVSPYYTHGIFAVKRDAKYYMRMTKIYFKKMNRVWLMASFLALGAGVGFFYKSRQINEQLSNMPVASAQANTTKTDHTIDELPRLSINSFAQMGYDVNVSFKDAKGKIYYSFDLMKSGYALDIKDSCHITLRKRNYIQQVTCEG.

Position 8–15 (8–15 (GKLGAGKT)) interacts with ATP. A helical membrane pass occupies residues 255-272 (VWLMASFLALGAGVGFFY).

The protein belongs to the inovirus G1P protein family. As to quaternary structure, interacts with G4P; this interaction results in a complex that spans the inner an outer host membranes.

It is found in the host membrane. Isoform G1P plays an essential role in phage assembly. It is required to increase the number of adhesion zones between the inner and outer membranes of the host cell. The extrusion of neo-synthesized phages occurs at these adhesion sites. May be involved with G4P in creating zone through which the phage assembled and extruded. Its function is as follows. Isoform G11P is also involved in phage assembly, probably playing a structural role in the formation of the phage assembly site. The sequence is that of Gene 1 protein (I) from Escherichia coli (Bacteriophage I2-2).